We begin with the raw amino-acid sequence, 328 residues long: Phosphoserine phosphatase (328 aa).

Aspartate 113 (nucleophile) is an active-site residue. Mg(2+)-binding residues include aspartate 113 and aspartate 115. Aspartate 115 acts as the Proton donor in catalysis. Residues glutamate 122, arginine 158, 201–202 (SG), and lysine 246 contribute to the substrate site. Residue aspartate 269 coordinates Mg(2+). Asparagine 272 provides a ligand contact to substrate.

Belongs to the HAD-like hydrolase superfamily. SerB family. Requires Mg(2+) as cofactor.

It carries out the reaction O-phospho-L-serine + H2O = L-serine + phosphate. The enzyme catalyses O-phospho-D-serine + H2O = D-serine + phosphate. The protein operates within amino-acid biosynthesis; L-serine biosynthesis; L-serine from 3-phospho-D-glycerate: step 3/3. The polypeptide is Phosphoserine phosphatase (Vibrio cholerae serotype O1 (strain ATCC 39315 / El Tor Inaba N16961)).